The primary structure comprises 452 residues: Pup--protein ligase (452 aa).

Glu9 contacts Mg(2+). Arg53 lines the ATP pocket. Tyr55 is a binding site for Mg(2+). Asp57 functions as the Proton acceptor in the catalytic mechanism. Glu63 contacts Mg(2+). ATP is bound by residues Thr66 and Trp419.

It belongs to the Pup ligase/Pup deamidase family. Pup-conjugating enzyme subfamily.

It carries out the reaction ATP + [prokaryotic ubiquitin-like protein]-L-glutamate + [protein]-L-lysine = ADP + phosphate + N(6)-([prokaryotic ubiquitin-like protein]-gamma-L-glutamyl)-[protein]-L-lysine.. It participates in protein degradation; proteasomal Pup-dependent pathway. The protein operates within protein modification; protein pupylation. Its function is as follows. Catalyzes the covalent attachment of the prokaryotic ubiquitin-like protein modifier Pup to the proteasomal substrate proteins, thereby targeting them for proteasomal degradation. This tagging system is termed pupylation. The ligation reaction involves the side-chain carboxylate of the C-terminal glutamate of Pup and the side-chain amino group of a substrate lysine. This Mycobacterium tuberculosis (strain KZN 1435 / MDR) protein is Pup--protein ligase.